The chain runs to 360 residues: Photosystem II protein D1 (360 aa).

Helical transmembrane passes span 30–47, 119–134, and 143–157; these read YVGW…AAAA, HFLI…QWEL, and WICV…AAFA. Residue H119 coordinates chlorophyll a. A pheophytin a-binding site is contributed by Y127. D171 and E190 together coordinate [CaMn4O5] cluster. A helical membrane pass occupies residues 198 to 219; sequence FHMAGVAGMFGGSLFSAMHGSL. H199 contributes to the chlorophyll a binding site. Residues H216 and 265 to 266 contribute to the a quinone site; that span reads SF. Fe cation is bound at residue H216. A Fe cation-binding site is contributed by H273. Residues 275–289 traverse the membrane as a helical segment; sequence FLAVFPVVCVWLTSM. Residues H333, E334, D343, and A345 each coordinate [CaMn4O5] cluster. A propeptide spanning residues 346–360 is cleaved from the precursor; sequence AAESTTVALTAPAIG.

Belongs to the reaction center PufL/M/PsbA/D family. In terms of assembly, PSII is composed of 1 copy each of membrane proteins PsbA, PsbB, PsbC, PsbD, PsbE, PsbF, PsbH, PsbI, PsbJ, PsbK, PsbL, PsbM, PsbT, PsbX, PsbY, Psb30/Ycf12, peripheral proteins PsbO, CyanoQ (PsbQ), PsbU, PsbV and a large number of cofactors. It forms dimeric complexes. The D1/D2 heterodimer binds P680, chlorophylls that are the primary electron donor of PSII, and subsequent electron acceptors. It shares a non-heme iron and each subunit binds pheophytin, quinone, additional chlorophylls, carotenoids and lipids. D1 provides most of the ligands for the Mn4-Ca-O5 cluster of the oxygen-evolving complex (OEC). There is also a Cl(-1) ion associated with D1 and D2, which is required for oxygen evolution. The PSII complex binds additional chlorophylls, carotenoids and specific lipids. serves as cofactor. Post-translationally, tyr-162 forms a radical intermediate that is referred to as redox-active TyrZ, YZ or Y-Z. In terms of processing, C-terminally processed by CtpA; processing is essential to allow assembly of the oxygen-evolving complex and thus photosynthetic growth.

Its subcellular location is the cellular thylakoid membrane. It catalyses the reaction 2 a plastoquinone + 4 hnu + 2 H2O = 2 a plastoquinol + O2. Photosystem II (PSII) is a light-driven water:plastoquinone oxidoreductase that uses light energy to abstract electrons from H(2)O, generating O(2) and a proton gradient subsequently used for ATP formation. It consists of a core antenna complex that captures photons, and an electron transfer chain that converts photonic excitation into a charge separation. The D1/D2 (PsbA/PsbD) reaction center heterodimer binds P680, the primary electron donor of PSII as well as several subsequent electron acceptors. This is Photosystem II protein D1 from Prochlorococcus marinus (strain MIT 9515).